The chain runs to 280 residues: MSEYSAGRSGFSPAYLDRVGSSFTDFLAAAAPHLLPGSRPVPQIPVGNVTPHGTTIVSVTYDGGVLMGGDRRATMGNLISSREIEKVYPADAWSVIGIAGAAGIAIEMVRLYQVELEHYEKIEGLTLSLDGKANRLAQMIRGNLGAALQGLAVVPLFAGFDLDAAPGAAPGRIFSYDVTGGNYEERGYSAVGSGSLFARNSLKKTWRPNLDGDAATRSLVEALYDAADDDSATGGPDPVRRLYPIVYRVDAEGAVRVPDDEIAAVATRITDERSAADGQG.

Residues 1–53 (MSEYSAGRSGFSPAYLDRVGSSFTDFLAAAAPHLLPGSRPVPQIPVGNVTPHG) constitute a propeptide, removed in mature form; by autocatalysis. Thr-54 functions as the Nucleophile in the catalytic mechanism.

This sequence belongs to the peptidase T1B family. The 20S proteasome core is composed of 14 alpha and 14 beta subunits that assemble into four stacked heptameric rings, resulting in a barrel-shaped structure. The two inner rings, each composed of seven catalytic beta subunits, are sandwiched by two outer rings, each composed of seven alpha subunits. The catalytic chamber with the active sites is on the inside of the barrel. Has a gated structure, the ends of the cylinder being occluded by the N-termini of the alpha-subunits. Is capped by the proteasome-associated ATPase, ARC.

The protein resides in the cytoplasm. It carries out the reaction Cleavage of peptide bonds with very broad specificity.. The protein operates within protein degradation; proteasomal Pup-dependent pathway. Its activity is regulated as follows. The formation of the proteasomal ATPase ARC-20S proteasome complex, likely via the docking of the C-termini of ARC into the intersubunit pockets in the alpha-rings, may trigger opening of the gate for substrate entry. Interconversion between the open-gate and close-gate conformations leads to a dynamic regulation of the 20S proteasome proteolysis activity. Component of the proteasome core, a large protease complex with broad specificity involved in protein degradation. In Geodermatophilus obscurus (strain ATCC 25078 / DSM 43160 / JCM 3152 / CCUG 61914 / KCC A-0152 / KCTC 9177 / NBRC 13315 / NRRL B-3577 / G-20), this protein is Proteasome subunit beta.